A 93-amino-acid polypeptide reads, in one-letter code: DNA/RNA-binding protein Alba (93 aa).

Position 11 is an N6-acetyllysine (Lys11).

It belongs to the histone-like Alba family. In terms of processing, acetylated. Acetylation at Lys-11 decreases DNA-binding affinity.

The protein resides in the cytoplasm. It is found in the chromosome. Functionally, binds double-stranded DNA tightly but without sequence specificity. Involved in DNA compaction. This Pyrococcus abyssi (strain GE5 / Orsay) protein is DNA/RNA-binding protein Alba.